Reading from the N-terminus, the 650-residue chain is Peroxisomal biogenesis factor 8 (650 aa).

The Microbody targeting signal motif lies at 648–650 (AKL).

It is found in the peroxisome matrix. Functionally, essential for peroxisome biogenesis. May play a role in triggering the protein import competence of individual peroxisomes. It may interact with PEX10. In Pichia angusta (Yeast), this protein is Peroxisomal biogenesis factor 8 (PEX8).